The following is a 1173-amino-acid chain: Pleckstrin homology domain-containing family A member 6 (1173 aa).

Positions 1–22 (MSNKTGGKRSATINSDIANHNM) are enriched in polar residues. The tract at residues 1–39 (MSNKTGGKRSATINSDIANHNMVSEVPPERPNIRATRTS) is disordered. Residues 59–158 (PVTKAGWLYK…WIQAMGEAAR (100 aa)) form the PH domain. Positions 163–346 (PAQKSVPQPV…PSRFYPMPRR (184 aa)) are disordered. The segment covering 201-233 (LEPEAKTRGEGDGRGCEKAERRPERPEVKKETL) has biased composition (basic and acidic residues). Serine 247 and serine 251 each carry phosphoserine. Polar residues-rich tracts occupy residues 270–281 (NGWQYSSPSRPG) and 311–322 (RKSSMNQLQQWV). 4 positions are modified to phosphoserine: serine 314, serine 459, serine 461, and serine 472. The residue at position 492 (tyrosine 492) is a Phosphotyrosine. Residue serine 665 is modified to Phosphoserine. Disordered stretches follow at residues 737-872 (RKNN…PRDI) and 888-984 (ALNK…RPAY). Composition is skewed to low complexity over residues 761–782 (SSNS…SPFS) and 789–799 (GSPTKPGSSEE). Over residues 815 to 824 (ESPPTVPPLP) the composition is skewed to pro residues. Serine 864 is subject to Phosphoserine. A Phosphothreonine modification is found at threonine 868. Serine 901 is modified (phosphoserine). Position 908 is a phosphothreonine (threonine 908). Positions 915–926 (RTTNGLTNGLSS) are enriched in polar residues. Serine 925 carries the phosphoserine modification. Positions 940 to 952 (GKVKMSVEEQMDR) are enriched in basic and acidic residues. Residues 953-967 (MRRHQSGSMKEKRRS) show a composition bias toward basic residues. 3 positions are modified to phosphoserine: serine 973, serine 979, and serine 992. Threonine 1045 bears the Phosphothreonine mark. Serine 1065 carries the phosphoserine modification. Disordered regions lie at residues 1093–1114 (PIGE…QEQE) and 1130–1173 (RGRM…TMRV). Threonine 1140 bears the Phosphothreonine mark. The segment covering 1141-1155 (PSPPTSPASPTPPVN) has biased composition (pro residues). The residue at position 1142 (serine 1142) is a Phosphoserine. Residue threonine 1145 is modified to Phosphothreonine. Serine 1146 and serine 1149 each carry phosphoserine. Threonine 1151 carries the post-translational modification Phosphothreonine.

The sequence is that of Pleckstrin homology domain-containing family A member 6 (Plekha6) from Mus musculus (Mouse).